The chain runs to 98 residues: Large ribosomal subunit protein bL25 (98 aa).

The interval M1–R23 is disordered.

Belongs to the bacterial ribosomal protein bL25 family. As to quaternary structure, part of the 50S ribosomal subunit; part of the 5S rRNA/L5/L18/L25 subcomplex. Contacts the 5S rRNA. Binds to the 5S rRNA independently of L5 and L18.

In terms of biological role, this is one of the proteins that binds to the 5S RNA in the ribosome where it forms part of the central protuberance. The sequence is that of Large ribosomal subunit protein bL25 from Acinetobacter baumannii (strain AB307-0294).